A 970-amino-acid chain; its full sequence is MSKGFTFEKNLPHQKAGVDAVMNVFVSATSHQEDNVSIRLLVNPELRLTEQQYYKNIKKVQELNGIEHVKNNYDARSNVIDVSMETGTGKTYTYTKTIFDLNKSFGINKFIIIVPTLSIKAGTVNFLKSDALKEHFRDDYEREIKTYVVESQKNAGKSTKSYMPQAIHDFVEASNFNKKYIHVLVINTGMIHSKNLNSTYDVGLLDNHFDSPFSALGAVKPFIIIDEPHKFPTGKKTWENIEKFNAQYIIRYGATFSEGYKNLVYRLTAVDAFNEDLVKGIDAYIEDIVGDGDANLKFIKSDGEEVTFELNENNKKTLFKLTKGESLSKTHSAIHDLTLDALGKNTVVLSNGIELKIGCSINPYSYDQTLADSMMRKAIKEHFKLEKEFLTQRPRIKPLTLFFIDDIEGYRDGNNIAGSLKAKFEEYVLAEANELLKIEKDEFYSNYLEKTVKDISSVHGGYFSKDNSDKDDKIEKEINEILHDKELLLSLDNPRRFIFSKWTLREGWDNPNVFQICKLRSSGSTTSKLQEVGRGLRLPVNEYMCRVKDRNFTLKYYVDFTEKDFVDSLVKEVNESSFKERVPSKFTQELKEQIRAQYPELSSRALMNELFNDEIIDDNDNFKDSDAYSRLKSKYPAAFPIGVKPGKIKKATDGKRRTKMRVGKFSELKELWELINQKAVIEYKINSENEFLSIFKSFMLEETERFTKSGVHTRIDKIYIHNDMAMSKSIVSDDDDFAKLNTMSYREFLDNLSQTIFVKHDTLHKVFCDIKDTINITEYLNIQTIRKIKSGFSKYLLNNSFNKFSLGYNLISGSIHPTKFTNADGKPLDEVLSSDLGVLQDNSKAPLDTYLFEEVFYDSELERRNITDREIQSVVVFSKIPKNSIKIPVAGGYTYSPDFAYVVKTAEGDYLNFIIETKNVDSKDSLRLEEKKKIEHAQALFNQISQSVKVEFKTQFANDDIYQLIKSALP.

Residues 75–540 are helicase-like domain; sequence ARSNVIDVSM…EVGRGLRLPV (466 aa). Residues 894–918 are endonuclease domain; it reads TYSPDFAYVVKTAEGDYLNFIIETK.

It belongs to the type III restriction-modification system Res protein family. As to quaternary structure, a heterotetramer with stoichiometry Res(2)Mod(2). It depends on Mg(2+) as a cofactor. The cofactor is S-adenosyl-L-methionine.

The catalysed reaction is Endonucleolytic cleavage of DNA to give specific double-stranded fragments with terminal 5'-phosphates.. Its function is as follows. A type III restriction enzyme that recognizes 2 inversely oriented double-stranded sequences 5'-AGACC-3' and cleaves DNA 25-27 base pairs downstream of one site, producing a single-strand 5' protrusion of two nucleotides. DNA restriction requires both the Res and Mod subunits. DNA topology affects its action; relaxed and negatively supercoiled DNA are digested but positively supercoiled DNA is not a good substrate. After binding to one recognition site undergoes random one-dimensional diffusion along DNA until it collides with a stationary enzyme bound to the second DNA site, which is when DNA cleavage occurs. In Enterobacteriaceae (Bacteriophage P1), this protein is Type III restriction-modification enzyme EcoPI Res subunit.